We begin with the raw amino-acid sequence, 137 residues long: Hydrogenase-4 component J (137 aa).

This sequence to E.coli HycH.

Functionally, possible component of hydrogenase 4. The sequence is that of Hydrogenase-4 component J from Escherichia coli (strain K12).